A 227-amino-acid chain; its full sequence is Enolase-phosphatase E1 (227 aa).

Belongs to the HAD-like hydrolase superfamily. MasA/MtnC family. In terms of assembly, monomer. Requires Mg(2+) as cofactor.

The enzyme catalyses 5-methylsulfanyl-2,3-dioxopentyl phosphate + H2O = 1,2-dihydroxy-5-(methylsulfanyl)pent-1-en-3-one + phosphate. The protein operates within amino-acid biosynthesis; L-methionine biosynthesis via salvage pathway; L-methionine from S-methyl-5-thio-alpha-D-ribose 1-phosphate: step 3/6. Its pathway is amino-acid biosynthesis; L-methionine biosynthesis via salvage pathway; L-methionine from S-methyl-5-thio-alpha-D-ribose 1-phosphate: step 4/6. Its function is as follows. Bifunctional enzyme that catalyzes the enolization of 2,3-diketo-5-methylthiopentyl-1-phosphate (DK-MTP-1-P) into the intermediate 2-hydroxy-3-keto-5-methylthiopentenyl-1-phosphate (HK-MTPenyl-1-P), which is then dephosphorylated to form the acireductone 1,2-dihydroxy-3-keto-5-methylthiopentene (DHK-MTPene). This Azotobacter vinelandii (strain DJ / ATCC BAA-1303) protein is Enolase-phosphatase E1.